A 202-amino-acid chain; its full sequence is FMN reductase (NADH) RutF (202 aa).

A compositionally biased stretch (low complexity) spans 168-191; it reads PRAPRGGSAPAEPARGARAIGARP. The disordered stretch occupies residues 168-202; that stretch reads PRAPRGGSAPAEPARGARAIGARPPEGPVLALRSA.

This sequence belongs to the non-flavoprotein flavin reductase family. RutF subfamily.

It carries out the reaction FMNH2 + NAD(+) = FMN + NADH + 2 H(+). Its function is as follows. Catalyzes the reduction of FMN to FMNH2 which is used to reduce pyrimidine by RutA via the Rut pathway. The protein is FMN reductase (NADH) RutF of Methylorubrum populi (strain ATCC BAA-705 / NCIMB 13946 / BJ001) (Methylobacterium populi).